The chain runs to 129 residues: Follitropin subunit beta (129 aa).

Positions 1 to 18 (MKSVQLCLLLWCWRAICC) are cleaved as a signal peptide. Disulfide bonds link Cys-21–Cys-69, Cys-35–Cys-84, Cys-38–Cys-122, Cys-46–Cys-100, Cys-50–Cys-102, and Cys-105–Cys-112. Residues Asn-25 and Asn-42 are each glycosylated (N-linked (GlcNAc...) asparagine).

Belongs to the glycoprotein hormones subunit beta family. Heterodimer. The active follitropin is a heterodimer composed of an alpha chain/CGA shared with other hormones and a unique beta chain/FSHB shown here.

It is found in the secreted. In terms of biological role, together with the alpha chain CGA constitutes follitropin, the follicle-stimulating hormone, and provides its biological specificity to the hormone heterodimer. Binds FSHR, a G protein-coupled receptor, on target cells to activate downstream signaling pathways. Follitropin is involved in follicle development and spermatogenesis in reproductive organs. This Meriones unguiculatus (Mongolian jird) protein is Follitropin subunit beta (FSHB).